A 130-amino-acid polypeptide reads, in one-letter code: Small ribosomal subunit protein uS11 (130 aa).

This sequence belongs to the universal ribosomal protein uS11 family. In terms of assembly, part of the 30S ribosomal subunit. Interacts with proteins S7 and S18. Binds to IF-3.

Located on the platform of the 30S subunit, it bridges several disparate RNA helices of the 16S rRNA. Forms part of the Shine-Dalgarno cleft in the 70S ribosome. The sequence is that of Small ribosomal subunit protein uS11 from Synechococcus sp. (strain CC9902).